Reading from the N-terminus, the 1040-residue chain is Putative protein tag-76 (1040 aa).

The span at 1 to 15 (MSRRNATSFVDNNTL) shows a compositional bias: polar residues. Disordered regions lie at residues 1–61 (MSRR…GSVS) and 322–367 (RTSK…PGAN). Positions 16–32 (TSSGISGSGSMSPPITS) are enriched in low complexity. The span at 33-50 (RPASGQASPLTSNGSLSP) shows a compositional bias: polar residues. A compositionally biased stretch (gly residues) spans 333–356 (GPGGPGGPGGYRGGRGGGRGGSYG). In terms of domain architecture, PAZ spans 379 to 486 (FTMDTLSRDT…LPMEHCLIDS (108 aa)). The Piwi domain maps to 660–966 (CIIVVLQSKN…VATRARCHVK (307 aa)).

This chain is Putative protein tag-76 (tag-76), found in Caenorhabditis elegans.